We begin with the raw amino-acid sequence, 176 residues long: NAD(P)H-quinone oxidoreductase subunit J (176 aa).

Polar residues predominate over residues 1–10 (MSETPTSPNQ). The disordered stretch occupies residues 1–22 (MSETPTSPNQDLPEAPQAGPLS).

This sequence belongs to the complex I 30 kDa subunit family. NDH-1 can be composed of about 15 different subunits; different subcomplexes with different compositions have been identified which probably have different functions.

It localises to the cellular thylakoid membrane. The catalysed reaction is a plastoquinone + NADH + (n+1) H(+)(in) = a plastoquinol + NAD(+) + n H(+)(out). It catalyses the reaction a plastoquinone + NADPH + (n+1) H(+)(in) = a plastoquinol + NADP(+) + n H(+)(out). NDH-1 shuttles electrons from an unknown electron donor, via FMN and iron-sulfur (Fe-S) centers, to quinones in the respiratory and/or the photosynthetic chain. The immediate electron acceptor for the enzyme in this species is believed to be plastoquinone. Couples the redox reaction to proton translocation, and thus conserves the redox energy in a proton gradient. Cyanobacterial NDH-1 also plays a role in inorganic carbon-concentration. In Synechococcus sp. (strain RCC307), this protein is NAD(P)H-quinone oxidoreductase subunit J.